A 592-amino-acid polypeptide reads, in one-letter code: MIDLSTMKQQIATLLNQAIERLKTKGVLKPEVTPVIKITHTTDPQHGDFATNLALTLSKAAGMSPHALAEKIVEALPPSGQITEVEIAGPGFINFFVTEGSYQTIVSSILKAGKDYGRSEMGKGQRVHMEYVSANPTGPLHVGHGRGAAYGACVANLLNAAGFEVHREYYVNDAGRQMGILALSVWIRYLQGYEASIELPKNAYQGEYIIDIAEALKAKYGKQFYHSVESIQAKIPEEIDSNADPEAYLDAWVTAQKDLLGPKDFECVFQAALDSILNDIKNDLEEFGVTYDDWFPESRLVREGLIQEGLDLLTKHGYVYEKNGAQWFRATALGDEKDRVLIRKNGLPTYFAADVAYHLHKFNQGYDQIIDIFGADHHGYIPRIRGFLKGLGKAPEKLHILLVQFAILYRGNEKVSMSTRGGTFVTLRELRHEVGNDAARFFYIMRKPDQHLDFDLELAKSQSNENPVYYIQYAHARICSVFRQLKTTQKNWDRPRGMENLSLLSTNYEKELLATLGRYPEVIKRAAMNYAPHLLAHYLQTLANQFHTYYNAERFLIEDDNLRNARLNLINAVQQIIRNGLTLLGVSAPEEM.

Residues 134-144 (ANPTGPLHVGH) carry the 'HIGH' region motif.

It belongs to the class-I aminoacyl-tRNA synthetase family. Monomer.

Its subcellular location is the cytoplasm. The catalysed reaction is tRNA(Arg) + L-arginine + ATP = L-arginyl-tRNA(Arg) + AMP + diphosphate. The protein is Arginine--tRNA ligase of Coxiella burnetii (strain CbuG_Q212) (Coxiella burnetii (strain Q212)).